The following is a 92-amino-acid chain: Integration host factor subunit beta (92 aa).

This sequence belongs to the bacterial histone-like protein family. As to quaternary structure, heterodimer of an alpha and a beta chain.

Its function is as follows. This protein is one of the two subunits of integration host factor, a specific DNA-binding protein that functions in genetic recombination as well as in transcriptional and translational control. In Azotobacter vinelandii (strain DJ / ATCC BAA-1303), this protein is Integration host factor subunit beta.